Reading from the N-terminus, the 429-residue chain is Trigger factor (429 aa).

In terms of domain architecture, PPIase FKBP-type spans 163 to 248 (GDFVVIDFVG…IKEIKVKETP (86 aa)).

The protein belongs to the FKBP-type PPIase family. Tig subfamily.

The protein resides in the cytoplasm. It catalyses the reaction [protein]-peptidylproline (omega=180) = [protein]-peptidylproline (omega=0). Involved in protein export. Acts as a chaperone by maintaining the newly synthesized protein in an open conformation. Functions as a peptidyl-prolyl cis-trans isomerase. The sequence is that of Trigger factor from Halothermothrix orenii (strain H 168 / OCM 544 / DSM 9562).